The following is a 209-amino-acid chain: Kynurenine formamidase (209 aa).

Trp19 lines the substrate pocket. Zn(2+) is bound by residues His49, His53, and Asp55. The Proton donor/acceptor role is filled by His59. Zn(2+) is bound by residues His160 and Glu172.

This sequence belongs to the Cyclase 1 superfamily. KynB family. Homodimer. It depends on Zn(2+) as a cofactor.

It catalyses the reaction N-formyl-L-kynurenine + H2O = L-kynurenine + formate + H(+). Its pathway is amino-acid degradation; L-tryptophan degradation via kynurenine pathway; L-kynurenine from L-tryptophan: step 2/2. In terms of biological role, catalyzes the hydrolysis of N-formyl-L-kynurenine to L-kynurenine, the second step in the kynurenine pathway of tryptophan degradation. This chain is Kynurenine formamidase, found in Ralstonia nicotianae (strain ATCC BAA-1114 / GMI1000) (Ralstonia solanacearum).